The chain runs to 168 residues: uncharacterized protein (168 aa).

The helical transmembrane segment at 23–47 (LFARASIIGVALLLSACATVPMASV) threads the bilayer.

It is found in the membrane. This is an uncharacterized protein from Haemophilus influenzae (strain ATCC 51907 / DSM 11121 / KW20 / Rd).